A 699-amino-acid polypeptide reads, in one-letter code: MFKALFGVLQKIGRALMLPVAILPAAGILLAIGNAMQNKDMIQVLHFLSNDNVQLVAGVMESAGQIVFDNLPLLFAVGVAIGLANGDGVAGIAAIIGYLVMNVSMSAVLLANGTIPSDSVERAKFFTENHPAYVNMLGIPTLATGVFGGIIVGVLAALLFNRFYTIELPQYLGFFAGKRFVPIVTSISALILGLIMLVIWPPIQHGLNAFSTGLVEANPTLAAFIFGVIERSLIPFGLHHIFYSPFWYEFFSYKSAAGEIIRGDQRIFMAQIKDGVQLTAGTFMTGKYPFMMFGLPAAALAIYHEAKPQNKKLVAGIMGSAALTSFLTGITEPLEFSFLFVAPVLFAIHCLFAGLSFMVMQLLNVKIGMTFSGGLIDYFLFGILPNRTAWWLVIPVGLGLAVIYYFGFRFAIRKFNLKTPGREDAAEETAAPGKTGEAGDLPYEILQAMGDQENIKHLDACITRLRVTVNDQKKVDKDRLKQLGASGVLEVGNNIQAIFGPRSDGLKTQMQDIIAGRKPRPEPKTSAQEEVGQQVEEVIAEPLQNEIGEEVFVSPITGEIHPITDVPDQVFSGKMMGDGFAILPSEGIVVSPVRGKILNVFPTKHAIGLQSDGGREILIHFGIDTVSLKGEGFTSFVSEGDRVEPGQKLLEVDLDAVKPNVPSLMTPIVFTNLAEGETVSIKASGSVNREQEDIVKIEK.

Residues lysine 3–aspartate 424 form the PTS EIIC type-1 domain. A run of 11 helical transmembrane segments spans residues leucine 16 to methionine 36, isoleucine 66 to glycine 86, valine 89 to leucine 109, isoleucine 139 to leucine 159, phenylalanine 180 to tryptophan 200, leucine 233 to tyrosine 253, phenylalanine 283 to tyrosine 303, leucine 313 to proline 333, phenylalanine 338 to methionine 358, valine 365 to proline 385, and threonine 388 to phenylalanine 408. Residues glycine 439–arginine 520 enclose the PTS EIIB type-1 domain. Cysteine 461 (phosphocysteine intermediate; for EIIB activity) is an active-site residue. One can recognise a PTS EIIA type-1 domain in the interval aspartate 568–asparagine 672. Histidine 620 functions as the Tele-phosphohistidine intermediate; for EIIA activity in the catalytic mechanism.

It localises to the cell membrane. The catalysed reaction is N(pros)-phospho-L-histidyl-[protein] + D-glucose(out) = D-glucose 6-phosphate(in) + L-histidyl-[protein]. It carries out the reaction D-glucosamine(out) + N(pros)-phospho-L-histidyl-[protein] = D-glucosamine 6-phosphate(in) + L-histidyl-[protein]. Functionally, the phosphoenolpyruvate-dependent sugar phosphotransferase system (sugar PTS), a major carbohydrate active transport system, catalyzes the phosphorylation of incoming sugar substrates concomitantly with their translocation across the cell membrane. This system is involved in glucose transport. The system can also transport glucosamine. Its function is as follows. In addition, plays an important role in the phosphorylation of EIIA-deficient PTS transporters. The EIIA domain can transfer a phosphoryl group to EIIA-deficient PTS transporters, enabling growth with maltose, N-acetylglucosamine, sucrose or trehalose as the sole carbon source. The polypeptide is PTS system glucose-specific EIICBA component (ptsG) (Bacillus subtilis (strain 168)).